A 338-amino-acid chain; its full sequence is Ketol-acid reductoisomerase (NADP(+)) (338 aa).

A KARI N-terminal Rossmann domain is found at 1–181; the sequence is MQIFYDKDCD…GGGRTGIIET (181 aa). NADP(+)-binding positions include 24-27, R47, S50, S52, and 82-85; these read YGSQ and DEFQ. The active site involves H107. G133 contacts NADP(+). One can recognise a KARI C-terminal knotted domain in the interval 182–327; that stretch reads SFREETETDL…SKLRAMMPWI (146 aa). Residues D190, E194, E226, and E230 each coordinate Mg(2+). Position 251 (S251) interacts with substrate.

This sequence belongs to the ketol-acid reductoisomerase family. Mg(2+) serves as cofactor.

It catalyses the reaction (2R)-2,3-dihydroxy-3-methylbutanoate + NADP(+) = (2S)-2-acetolactate + NADPH + H(+). The enzyme catalyses (2R,3R)-2,3-dihydroxy-3-methylpentanoate + NADP(+) = (S)-2-ethyl-2-hydroxy-3-oxobutanoate + NADPH + H(+). It functions in the pathway amino-acid biosynthesis; L-isoleucine biosynthesis; L-isoleucine from 2-oxobutanoate: step 2/4. It participates in amino-acid biosynthesis; L-valine biosynthesis; L-valine from pyruvate: step 2/4. Functionally, involved in the biosynthesis of branched-chain amino acids (BCAA). Catalyzes an alkyl-migration followed by a ketol-acid reduction of (S)-2-acetolactate (S2AL) to yield (R)-2,3-dihydroxy-isovalerate. In the isomerase reaction, S2AL is rearranged via a Mg-dependent methyl migration to produce 3-hydroxy-3-methyl-2-ketobutyrate (HMKB). In the reductase reaction, this 2-ketoacid undergoes a metal-dependent reduction by NADPH to yield (R)-2,3-dihydroxy-isovalerate. This chain is Ketol-acid reductoisomerase (NADP(+)), found in Acinetobacter baylyi (strain ATCC 33305 / BD413 / ADP1).